The following is a 248-amino-acid chain: Probable transcriptional regulatory protein Oant_1200 (248 aa).

It belongs to the TACO1 family.

The protein localises to the cytoplasm. The protein is Probable transcriptional regulatory protein Oant_1200 of Brucella anthropi (strain ATCC 49188 / DSM 6882 / CCUG 24695 / JCM 21032 / LMG 3331 / NBRC 15819 / NCTC 12168 / Alc 37) (Ochrobactrum anthropi).